Here is a 231-residue protein sequence, read N- to C-terminus: Elongation factor 1-delta (231 aa).

The disordered stretch occupies residues 75 to 136 (SGVTVEGNAP…AAAAAAKPAK (62 aa)). Over residues 101-117 (ADDDDDDDVDLFGEETE) the composition is skewed to acidic residues. A compositionally biased stretch (basic and acidic residues) spans 118–127 (EEKKAAEERA).

Belongs to the EF-1-beta/EF-1-delta family. As to quaternary structure, EF-1 is composed of 4 subunits: alpha, beta (1B-alpha=beta'), delta (1B-beta), and gamma (1B-gamma).

In terms of biological role, EF-1-beta and EF-1-beta' stimulate the exchange of GDP bound to EF-1-alpha to GTP. This Beta vulgaris (Sugar beet) protein is Elongation factor 1-delta.